We begin with the raw amino-acid sequence, 347 residues long: Ornithine carbamoyltransferase (347 aa).

Carbamoyl phosphate-binding positions include 56 to 59, Gln83, Arg107, and 134 to 137; these read STRT and HPTQ. L-ornithine-binding positions include Asn168, Asp232, and 236-237; that span reads SM. Carbamoyl phosphate-binding positions include 274 to 275 and Arg320; that span reads CL.

This sequence belongs to the aspartate/ornithine carbamoyltransferase superfamily. OTCase family.

It localises to the cytoplasm. It carries out the reaction carbamoyl phosphate + L-ornithine = L-citrulline + phosphate + H(+). Functionally, reversibly catalyzes the transfer of the carbamoyl group from carbamoyl phosphate (CP) to the N(epsilon) atom of ornithine (ORN) to produce L-citrulline. In Blochmanniella floridana, this protein is Ornithine carbamoyltransferase.